Here is a 73-residue protein sequence, read N- to C-terminus: Long neurotoxin 2 (73 aa).

Disulfide bonds link Cys-3/Cys-21, Cys-14/Cys-42, Cys-27/Cys-31, Cys-46/Cys-57, and Cys-58/Cys-63.

Belongs to the three-finger toxin family. Long-chain subfamily. Type II alpha-neurotoxin sub-subfamily. As to expression, expressed by the venom gland.

It is found in the secreted. Binds with high affinity to muscular (alpha-1/CHRNA1) and neuronal (alpha-7/CHRNA7) nicotinic acetylcholine receptor (nAChR) and inhibits acetylcholine from binding to the receptor, thereby impairing neuromuscular and neuronal transmission. The protein is Long neurotoxin 2 of Ophiophagus hannah (King cobra).